The sequence spans 212 residues: Golgi SNAP receptor complex member 2 (212 aa).

M1 carries the post-translational modification N-acetylmethionine. Residues 1 to 190 (MDPLFQQTHK…LIEKRAFQDK (190 aa)) lie on the Cytoplasmic side of the membrane. Residues 61 to 107 (NKRQNARLRVDQLKYDVQHLQTALRNFQHRRHAREQQERQREELLSR) adopt a coiled-coil conformation. Residues 118–120 (IPM) carry the IxM motif; signal for cargo packaging into COPII-coated vesicles motif. A helical; Anchor for type IV membrane protein membrane pass occupies residues 191-211 (YFMIGGMLLTCVVMFLVVQYL). Position 212 (T212) is a topological domain, vesicular.

Belongs to the GOSR2 family. As to quaternary structure, part of a unique SNARE complex composed of the Golgi SNAREs GOSR1, STX5 and YKT6. Interacts (via IxM motif) with SEC24C and SEC24D; mediates GOSR2 packaging into COPII-coated vesicles. Interacts with BET1.

The protein localises to the golgi apparatus. Its subcellular location is the cis-Golgi network membrane. It localises to the golgi apparatus membrane. The protein resides in the endoplasmic reticulum membrane. Functionally, involved in transport of proteins from the cis/medial-Golgi to the trans-Golgi network. In Homo sapiens (Human), this protein is Golgi SNAP receptor complex member 2 (GOSR2).